A 317-amino-acid polypeptide reads, in one-letter code: tRNA pseudouridine synthase B (317 aa).

The active-site Nucleophile is Asp-47.

The protein belongs to the pseudouridine synthase TruB family. Type 1 subfamily.

It catalyses the reaction uridine(55) in tRNA = pseudouridine(55) in tRNA. Responsible for synthesis of pseudouridine from uracil-55 in the psi GC loop of transfer RNAs. In Shewanella sp. (strain MR-7), this protein is tRNA pseudouridine synthase B.